The primary structure comprises 85 residues: uncharacterized protein (85 aa).

This is an uncharacterized protein from Fowlpox virus (strain NVSL) (FPV).